The chain runs to 73 residues: Translation initiation factor IF-1 (73 aa).

In terms of domain architecture, S1-like spans 1 to 73 (MSKKKDVIEM…TRGRITYRYK (73 aa)).

The protein belongs to the IF-1 family. In terms of assembly, component of the 30S ribosomal translation pre-initiation complex which assembles on the 30S ribosome in the order IF-2 and IF-3, IF-1 and N-formylmethionyl-tRNA(fMet); mRNA recruitment can occur at any time during PIC assembly.

The protein resides in the cytoplasm. In terms of biological role, one of the essential components for the initiation of protein synthesis. Stabilizes the binding of IF-2 and IF-3 on the 30S subunit to which N-formylmethionyl-tRNA(fMet) subsequently binds. Helps modulate mRNA selection, yielding the 30S pre-initiation complex (PIC). Upon addition of the 50S ribosomal subunit IF-1, IF-2 and IF-3 are released leaving the mature 70S translation initiation complex. This is Translation initiation factor IF-1 from Chloroflexus aurantiacus (strain ATCC 29366 / DSM 635 / J-10-fl).